A 35-amino-acid chain; its full sequence is Phospholipase A2 bitanarin (35 aa).

Belongs to the phospholipase A2 family. Group II subfamily. In terms of assembly, monomer. The cofactor is Ca(2+). Contains 14 disulfide bonds. As to expression, expressed by the venom gland.

It is found in the secreted. It catalyses the reaction a 1,2-diacyl-sn-glycero-3-phosphocholine + H2O = a 1-acyl-sn-glycero-3-phosphocholine + a fatty acid + H(+). Snake venom phospholipase A2 (PLA2) that is the first competitive blocker of nicotinic acetylcholine receptors (nAChRs). Competes with alpha-bungarotoxin for binding to nAChRs and acetylcholine binding proteins (AChBPs) and blocks acetylcholine-elicited current. PLA2 catalyzes the calcium-dependent hydrolysis of the 2-acyl groups in 3-sn-phosphoglycerides. This Bitis arietans (African puff adder) protein is Phospholipase A2 bitanarin.